We begin with the raw amino-acid sequence, 257 residues long: 1-(5-phosphoribosyl)-5-[(5-phosphoribosylamino)methylideneamino] imidazole-4-carboxamide isomerase (257 aa).

Residue Asp8 is the Proton acceptor of the active site. The active-site Proton donor is the Asp129.

This sequence belongs to the HisA/HisF family.

Its subcellular location is the cytoplasm. It catalyses the reaction 1-(5-phospho-beta-D-ribosyl)-5-[(5-phospho-beta-D-ribosylamino)methylideneamino]imidazole-4-carboxamide = 5-[(5-phospho-1-deoxy-D-ribulos-1-ylimino)methylamino]-1-(5-phospho-beta-D-ribosyl)imidazole-4-carboxamide. It participates in amino-acid biosynthesis; L-histidine biosynthesis; L-histidine from 5-phospho-alpha-D-ribose 1-diphosphate: step 4/9. The chain is 1-(5-phosphoribosyl)-5-[(5-phosphoribosylamino)methylideneamino] imidazole-4-carboxamide isomerase from Acaryochloris marina (strain MBIC 11017).